A 311-amino-acid polypeptide reads, in one-letter code: Small ribosomal subunit biogenesis GTPase RsgA (311 aa).

The 159-residue stretch at 88–246 (SKEKEQVIVA…VIDTPGIREF (159 aa)) folds into the CP-type G domain. GTP is bound by residues 137–140 (NKID) and 188–196 (GHSGVGKST). 4 residues coordinate Zn(2+): Cys-270, Cys-275, His-277, and Cys-283.

It belongs to the TRAFAC class YlqF/YawG GTPase family. RsgA subfamily. As to quaternary structure, monomer. Associates with 30S ribosomal subunit, binds 16S rRNA. Requires Zn(2+) as cofactor.

Its subcellular location is the cytoplasm. Functionally, one of several proteins that assist in the late maturation steps of the functional core of the 30S ribosomal subunit. Helps release RbfA from mature subunits. May play a role in the assembly of ribosomal proteins into the subunit. Circularly permuted GTPase that catalyzes slow GTP hydrolysis, GTPase activity is stimulated by the 30S ribosomal subunit. The chain is Small ribosomal subunit biogenesis GTPase RsgA from Chlorobaculum tepidum (strain ATCC 49652 / DSM 12025 / NBRC 103806 / TLS) (Chlorobium tepidum).